Reading from the N-terminus, the 760-residue chain is uncharacterized protein (760 aa).

The signal sequence occupies residues methionine 1–alanine 23. The N-palmitoyl cysteine moiety is linked to residue cysteine 24. Residue cysteine 24 is the site of S-diacylglycerol cysteine attachment. 2 disordered regions span residues alanine 220–asparagine 262 and tyrosine 443–serine 482. Polar residues-rich tracts occupy residues glycine 222 to alanine 257 and proline 448 to glutamine 472.

Belongs to the MG185/MG260 family.

The protein localises to the cell membrane. This is an uncharacterized protein from Mycoplasma pneumoniae (strain ATCC 29342 / M129 / Subtype 1) (Mycoplasmoides pneumoniae).